Reading from the N-terminus, the 225-residue chain is MANRIRLHIWGDYACFTRPEMKVERVSYDVITPSAARGILSAIHWKPAINWVIDKIYVLKPIRFESVRRNELGAKISESKVSGAMKRKSVADLYTVIEDDRQQRAATVLKDVAYVIEAHAVMTSKAGVDENTTKHIEMFKRRALKGQCFQQPCMGVREFPAHFALIDDNDPLPLSQLSESEFNRDLGWMLHDIDFEHGNTPHFFRAELKNGVIDVPPFYAEEVKR.

The protein belongs to the CRISPR-associated protein Cas5 family. Subtype I-C/Dvulg subfamily. It depends on Does not require a metal cofactor. as a cofactor.

Functionally, CRISPR (clustered regularly interspaced short palindromic repeat) is an adaptive immune system that provides protection against mobile genetic elements (viruses, transposable elements and conjugative plasmids). CRISPR clusters contain spacers, sequences complementary to antecedent mobile elements, and target invading nucleic acids. CRISPR clusters are transcribed and processed into CRISPR RNA (crRNA). This protein is a sequence-specific endonuclease that cleaves pre-crRNA at G21 into mature crRNA. Does not cleave pre-crRNA associated with the T.thermophilus strain HB27 Cas5 protein (AC Q746C2) CRISPR locus. The reaction mechanism may proceed by an intramolecular attack of the 2'-hydroxyl group of G21 on the scissile phosphodiester, cutting the precursor 3' to G21 residue yielding 5'-hydroxyl and 2' and/or 3' ends lacking a hydroxyl group (perhaps a 2'/3' cyclic phosphodiester). This Mannheimia succiniciproducens (strain KCTC 0769BP / MBEL55E) protein is CRISPR pre-crRNA endoribonuclease Cas5d.